Reading from the N-terminus, the 198-residue chain is V-type ATP synthase subunit E (198 aa).

This sequence belongs to the V-ATPase E subunit family.

Its function is as follows. Produces ATP from ADP in the presence of a proton gradient across the membrane. The protein is V-type ATP synthase subunit E of Clostridium perfringens (strain SM101 / Type A).